We begin with the raw amino-acid sequence, 370 residues long: MTNVNVDVTPLTTKPSQDGFYMPAEWAAQQAVWMIWPYRPDNWRAAGAYAQATFAKVADAIGAATPVYMGVPKAFLAEAKAVMPSHVTLVEMDSNDCWARDTGPTVVVNDNGECRGVDWGFNAWGGHNGGLYFPWDKDEQVAQQMLAQHGFARYSAPLILEGGSIHVDGEGTCMTSAECLLNANRNPELTKEQIEDLLRDYLNVKQFIWLQDGVYMDETDGHIDNMSCFARPGEVILHWTDDETDPQYPRSKAALEVLQNTVDAKGRKLKIHLLPQPGPLYCSEEESKGVTEGTGVPRTAGERLAGSYVNFLITNHRIVFPLLDPATDDIAAQKLQEIFPEHEIVGVPAREILLGGGNIHCITQQIPAGK.

Cys-361 functions as the Amidino-cysteine intermediate in the catalytic mechanism.

This sequence belongs to the agmatine deiminase family.

It carries out the reaction agmatine + H2O = N-carbamoylputrescine + NH4(+). The chain is Putative agmatine deiminase from Shewanella putrefaciens (strain CN-32 / ATCC BAA-453).